The chain runs to 105 residues: Nucleoid-associated protein Dred_0043 (105 aa).

Belongs to the YbaB/EbfC family. As to quaternary structure, homodimer.

It is found in the cytoplasm. Its subcellular location is the nucleoid. Its function is as follows. Binds to DNA and alters its conformation. May be involved in regulation of gene expression, nucleoid organization and DNA protection. The polypeptide is Nucleoid-associated protein Dred_0043 (Desulforamulus reducens (strain ATCC BAA-1160 / DSM 100696 / MI-1) (Desulfotomaculum reducens)).